The primary structure comprises 114 residues: Large ribosomal subunit protein uL22 (114 aa).

The protein belongs to the universal ribosomal protein uL22 family. Part of the 50S ribosomal subunit.

This protein binds specifically to 23S rRNA; its binding is stimulated by other ribosomal proteins, e.g. L4, L17, and L20. It is important during the early stages of 50S assembly. It makes multiple contacts with different domains of the 23S rRNA in the assembled 50S subunit and ribosome. In terms of biological role, the globular domain of the protein is located near the polypeptide exit tunnel on the outside of the subunit, while an extended beta-hairpin is found that lines the wall of the exit tunnel in the center of the 70S ribosome. This is Large ribosomal subunit protein uL22 from Streptococcus uberis (strain ATCC BAA-854 / 0140J).